We begin with the raw amino-acid sequence, 73 residues long: UPF0154 protein MG335.1 homolog (73 aa).

A helical membrane pass occupies residues 6 to 26 (LALGLGIPLSLLVGVIIGYFI).

The protein belongs to the UPF0154 family.

The protein localises to the membrane. The protein is UPF0154 protein MG335.1 homolog of Mycoplasma pneumoniae (strain ATCC 29342 / M129 / Subtype 1) (Mycoplasmoides pneumoniae).